Here is a 156-residue protein sequence, read N- to C-terminus: Large ribosomal subunit protein uL30 (156 aa).

The protein belongs to the universal ribosomal protein uL30 family. As to quaternary structure, part of the 50S ribosomal subunit.

The polypeptide is Large ribosomal subunit protein uL30 (Thermofilum pendens (strain DSM 2475 / Hrk 5)).